We begin with the raw amino-acid sequence, 232 residues long: tRNA (guanine-N(7)-)-methyltransferase (232 aa).

S-adenosyl-L-methionine is bound by residues E63, E88, D115, and D137. D137 is a catalytic residue. Substrate is bound by residues K141, D173, and T211–E214.

Belongs to the class I-like SAM-binding methyltransferase superfamily. TrmB family.

The catalysed reaction is guanosine(46) in tRNA + S-adenosyl-L-methionine = N(7)-methylguanosine(46) in tRNA + S-adenosyl-L-homocysteine. It participates in tRNA modification; N(7)-methylguanine-tRNA biosynthesis. Catalyzes the formation of N(7)-methylguanine at position 46 (m7G46) in tRNA. The chain is tRNA (guanine-N(7)-)-methyltransferase from Agrobacterium fabrum (strain C58 / ATCC 33970) (Agrobacterium tumefaciens (strain C58)).